Reading from the N-terminus, the 617-residue chain is Dihydroxy-acid dehydratase (617 aa).

Aspartate 81 is a binding site for Mg(2+). Cysteine 122 serves as a coordination point for [2Fe-2S] cluster. Mg(2+)-binding residues include aspartate 123 and lysine 124. Position 124 is an N6-carboxylysine (lysine 124). Cysteine 197 serves as a coordination point for [2Fe-2S] cluster. Glutamate 493 contributes to the Mg(2+) binding site. Residue serine 519 is the Proton acceptor of the active site.

It belongs to the IlvD/Edd family. Homodimer. The cofactor is [2Fe-2S] cluster. Mg(2+) serves as cofactor.

It catalyses the reaction (2R)-2,3-dihydroxy-3-methylbutanoate = 3-methyl-2-oxobutanoate + H2O. The enzyme catalyses (2R,3R)-2,3-dihydroxy-3-methylpentanoate = (S)-3-methyl-2-oxopentanoate + H2O. The protein operates within amino-acid biosynthesis; L-isoleucine biosynthesis; L-isoleucine from 2-oxobutanoate: step 3/4. Its pathway is amino-acid biosynthesis; L-valine biosynthesis; L-valine from pyruvate: step 3/4. Its function is as follows. Functions in the biosynthesis of branched-chain amino acids. Catalyzes the dehydration of (2R,3R)-2,3-dihydroxy-3-methylpentanoate (2,3-dihydroxy-3-methylvalerate) into 2-oxo-3-methylpentanoate (2-oxo-3-methylvalerate) and of (2R)-2,3-dihydroxy-3-methylbutanoate (2,3-dihydroxyisovalerate) into 2-oxo-3-methylbutanoate (2-oxoisovalerate), the penultimate precursor to L-isoleucine and L-valine, respectively. This Corynebacterium aurimucosum (strain ATCC 700975 / DSM 44827 / CIP 107346 / CN-1) (Corynebacterium nigricans) protein is Dihydroxy-acid dehydratase.